The primary structure comprises 104 residues: L-rhamnose mutarotase (104 aa).

Residue Tyr-18 participates in substrate binding. The Proton donor role is filled by His-22. Substrate is bound by residues Tyr-41 and 76–77; that span reads WW.

It belongs to the rhamnose mutarotase family. In terms of assembly, homodimer.

Its subcellular location is the cytoplasm. The enzyme catalyses alpha-L-rhamnose = beta-L-rhamnose. It participates in carbohydrate metabolism; L-rhamnose metabolism. Its function is as follows. Involved in the anomeric conversion of L-rhamnose. In Escherichia coli O8 (strain IAI1), this protein is L-rhamnose mutarotase.